Here is a 455-residue protein sequence, read N- to C-terminus: MARVPRHRRLVLPLLCLLFQGATALLFAIFVRYNHETDAALWHWGNHSNVDNEFYFRYPSFQDVHVMVFVGFGFLMVFLQRYGFSSVGFTFLVASLTLQWATLLQGFLHSFHGGHIHVGVESLINADFCAGAVLISFGAVLGKTGPAQLLLMALLEAVLFSVNEFILLSLLGVRDAGGSMTIHTFGAYFGLFLSWVLYRSQLEKSRHRQSSVYNSDLFAMIGTIFLWVFWPSFNSAPTALGDGQHRTVVNTYYSLTASTLSTFALSALVSGDGRLDMVHVQNAALAGGVVVGTSSEMMLTPFGALAAGFLAGTVSTLGYKFFTPILESRFKLQDTCGVHNLHGMPGVLGAILGVVVAALATHEAYGDGLQSVFPLIAKGQRSATSQAVYQLFGMFVTLVFASVGGSLGGLLLRLPFLDSPPDSQCFEDQVYWEVPGEQETETQRPLRGGESDTRA.

Topologically, residues 1-10 (MARVPRHRRL) are cytoplasmic. The chain crosses the membrane as a helical span at residues 11-31 (VLPLLCLLFQGATALLFAIFV). Over 32–58 (RYNHETDAALWHWGNHSNVDNEFYFRY) the chain is Extracellular. Asn46 carries N-linked (GlcNAc...) asparagine glycosylation. The helical transmembrane segment at 59–79 (PSFQDVHVMVFVGFGFLMVFL) threads the bilayer. Over 80 to 83 (QRYG) the chain is Cytoplasmic. A helical transmembrane segment spans residues 84–104 (FSSVGFTFLVASLTLQWATLL). Over 105-121 (QGFLHSFHGGHIHVGVE) the chain is Extracellular. Residues 122–142 (SLINADFCAGAVLISFGAVLG) traverse the membrane as a helical segment. Topologically, residues 143–146 (KTGP) are cytoplasmic. The helical transmembrane segment at 147–167 (AQLLLMALLEAVLFSVNEFIL) threads the bilayer. Over 168-175 (LSLLGVRD) the chain is Extracellular. A helical membrane pass occupies residues 176–198 (AGGSMTIHTFGAYFGLFLSWVLY). Topologically, residues 199–216 (RSQLEKSRHRQSSVYNSD) are cytoplasmic. Residues 217–237 (LFAMIGTIFLWVFWPSFNSAP) traverse the membrane as a helical segment. Residues 238–248 (TALGDGQHRTV) lie on the Extracellular side of the membrane. The chain crosses the membrane as a helical span at residues 249 to 269 (VNTYYSLTASTLSTFALSALV). Residues 270–279 (SGDGRLDMVH) are Cytoplasmic-facing. Residues 280 to 300 (VQNAALAGGVVVGTSSEMMLT) traverse the membrane as a helical segment. Residue Pro301 is a topological domain, extracellular. A helical membrane pass occupies residues 302–322 (FGALAAGFLAGTVSTLGYKFF). At 323–343 (TPILESRFKLQDTCGVHNLHG) the chain is on the cytoplasmic side. Residues 344 to 364 (MPGVLGAILGVVVAALATHEA) traverse the membrane as a helical segment. Residues 365–390 (YGDGLQSVFPLIAKGQRSATSQAVYQ) lie on the Extracellular side of the membrane. Residues 391–411 (LFGMFVTLVFASVGGSLGGLL) form a helical membrane-spanning segment. The Cytoplasmic portion of the chain corresponds to 412-455 (LRLPFLDSPPDSQCFEDQVYWEVPGEQETETQRPLRGGESDTRA). The tract at residues 413–421 (RLPFLDSPP) is interaction with ANK3. The disordered stretch occupies residues 434–455 (VPGEQETETQRPLRGGESDTRA). Residues 441 to 455 (ETQRPLRGGESDTRA) show a composition bias toward basic and acidic residues.

This sequence belongs to the ammonium transporter (TC 2.A.49) family. Rh subfamily. In terms of assembly, interacts (via C-terminus) with ANK2 and ANK3; required for targeting to the basolateral membrane. N-glycosylated. As to expression, expressed in kidney by connecting segments and collecting tubules. Also expressed in liver by perivenous hepatocytes. Expressed in the forestomach and the fundus of the stomach. Expressed in duodenum, jejunum, ileum and colon at the level of villous (at protein level). Specifically expressed in kidney where it is restricted to the epithelial linings of the convoluted tubules and the loop of Henle. Also detected in ovary. Expressed by hepatocytes and dermal hair follicles and papillae.

The protein resides in the cell membrane. The protein localises to the basolateral cell membrane. It catalyses the reaction NH4(+)(in) = NH4(+)(out). It carries out the reaction methylamine(out) = methylamine(in). The catalysed reaction is CO2(out) = CO2(in). Its activity is regulated as follows. Inhibited by amiloride. Functionally, ammonium transporter involved in the maintenance of acid-base homeostasis. Transports ammonium and its related derivative methylammonium across the basolateral plasma membrane of epithelial cells likely contributing to renal transepithelial ammonia transport and ammonia metabolism. May transport either NH4(+) or NH3 ammonia species predominantly mediating an electrogenic NH4(+) transport. May act as a CO2 channel providing for renal acid secretion. This Mus musculus (Mouse) protein is Ammonium transporter Rh type B (Rhbg).